The chain runs to 551 residues: MMKMLKKEEMGGYGEVESWWRRWLWSTNHKDIGTLYLYSGVWGGLFGASLSLMIRMQLGHPGAVFLKSDWFYNVVVTTHALMMIFFAVMPILIEAFGNWLIPLLVGGKDMIYPRMNNLSYWLSPNALYLLMLSFSTDKGVGAGWTIYPPLSVYPYHSGPSMDVLIVSLHLAGLSSLVGAINFASTNKNMPVLEMKGERAELYVLSISVTAVLLIISIPVLGGGITMILFDRNFNTTFFDPAGGGDPVLFQHLFWFFGHPEVYILILPAFGVMSKVIMHCSGKEAVFGLIGMVYAMIGIGGLGCMVWAHHMFTVGLNVDTRGYFSTATMVIAVPTGVKVFSWLATMAGSKFKMKPAAYWSTGFLFLFTVGGLTGVLLSSASMDVSLHDTYYVVAHFHYVLSMGAVFGVFCGLNHWLPNFVGVCFNKKWSKAHFMAMFFGVNTTFFPQHFLGLSGMPRRYMDYADIYAHWHWVSSYGSAVSFGSLMYFKFLLWEALVSQRGVVFSGGLCGEMDWAGTRDLYPGSKHVYSQLPFVWTNPYNTCITYIYKKSRNQ.

Residues threonine 34 to isoleucine 54 form a helical membrane-spanning segment. A Ca(2+)-binding site is contributed by glycine 62. Histidine 79 is a Fe(II)-heme a binding site. The next 6 helical transmembrane spans lie at leucine 81–isoleucine 101, alanine 126–isoleucine 146, valine 163–alanine 183, threonine 209–phenylalanine 229, leucine 252–methionine 272, and valine 285–valine 305. Residue histidine 258 coordinates Cu cation. The segment at residues histidine 258 to tyrosine 262 is a cross-link (1'-histidyl-3'-tyrosine (His-Tyr)). Tyrosine 262 contacts O2. Cu cation is bound by residues histidine 308 and histidine 309. 2 helical membrane passes run alanine 326 to alanine 346 and alanine 356 to leucine 376. The Mg(2+) site is built by histidine 386 and aspartate 387. Helical transmembrane passes span valine 391–leucine 411, phenylalanine 432–serine 452, and glycine 475–valine 495. Histidine 394 contacts heme a3. A Fe(II)-heme a-binding site is contributed by histidine 396.

The protein belongs to the heme-copper respiratory oxidase family. In terms of assembly, component of the cytochrome c oxidase (complex IV, CIV), a multisubunit enzyme composed of a catalytic core of 3 subunits and several supernumerary subunits. The complex exists as a monomer or a dimer and forms supercomplexes (SCs) in the inner mitochondrial membrane with ubiquinol-cytochrome c oxidoreductase (cytochrome b-c1 complex, complex III, CIII). Heme serves as cofactor. It depends on Cu cation as a cofactor.

It is found in the mitochondrion inner membrane. It catalyses the reaction 4 Fe(II)-[cytochrome c] + O2 + 8 H(+)(in) = 4 Fe(III)-[cytochrome c] + 2 H2O + 4 H(+)(out). It participates in energy metabolism; oxidative phosphorylation. Its function is as follows. Component of the cytochrome c oxidase, the last enzyme in the mitochondrial electron transport chain which drives oxidative phosphorylation. The respiratory chain contains 3 multisubunit complexes succinate dehydrogenase (complex II, CII), ubiquinol-cytochrome c oxidoreductase (cytochrome b-c1 complex, complex III, CIII) and cytochrome c oxidase (complex IV, CIV), that cooperate to transfer electrons derived from NADH and succinate to molecular oxygen, creating an electrochemical gradient over the inner membrane that drives transmembrane transport and the ATP synthase. Cytochrome c oxidase is the component of the respiratory chain that catalyzes the reduction of oxygen to water. Electrons originating from reduced cytochrome c in the intermembrane space (IMS) are transferred via the dinuclear copper A center (CU(A)) of subunit 2 and heme A of subunit 1 to the active site in subunit 1, a binuclear center (BNC) formed by heme A3 and copper B (CU(B)). The BNC reduces molecular oxygen to 2 water molecules using 4 electrons from cytochrome c in the IMS and 4 protons from the mitochondrial matrix. The sequence is that of Cytochrome c oxidase subunit 1 (COI) from Mytilus edulis (Blue mussel).